Here is a 361-residue protein sequence, read N- to C-terminus: mRNA export factor ICP27 homolog (361 aa).

A compositionally biased stretch (low complexity) spans 1-15; it reads MEDSGNSSGSEASRS. The segment at 1-107 is disordered; sequence MEDSGNSSGS…SESARAAVSA (107 aa). Residues 16-36 show a composition bias toward basic and acidic residues; the sequence is GSEERRPVRERLGSRPPERRP. Residues 45–54 form an RGG-box region; that stretch reads RRRRGGRGGR. Residues 80 to 99 show a composition bias toward basic and acidic residues; it reads RQEADRPDGGPDAPPDRLSE. Zn(2+) contacts are provided by Cys-253, His-328, Cys-332, and Cys-337. The CHC2-type zinc-finger motif lies at 253–337; the sequence is CYLRDTPVDE…HKTGCDAPTC (85 aa).

It belongs to the HHV-1 ICP27 protein family. Homodimer. Homodimerization is required for transactivation. Associates in a complex with RNA, and host export factors NXF1/TAP and ALYREF; these interactions allow nuclear export of viral transcripts. Interacts with three host shuttling SR proteins SRSF1, SRSF3 and SRSF7. Interacts with host SRPK1. Interacts with IE62; this interaction enhances IE62 transactivation.

The protein resides in the host cytoplasm. Its subcellular location is the host nucleus. Multifunctional regulator of the expression of viral genes that mediates nuclear export of viral intronless mRNAs. This immediate early (EI) protein promotes the nuclear export of viral intronless mRNAs by interacting with mRNAs and host NXF1/TAP. The protein is mRNA export factor ICP27 homolog of Suid herpesvirus 1 (strain Kaplan) (SuHV-1).